Here is a 1132-residue protein sequence, read N- to C-terminus: Large proline-rich protein BAG6 (1132 aa).

N-acetylmethionine is present on methionine 1. The Ubiquitin-like domain maps to 17 to 92 (LEVLVKTLDS…HLVERAPPQT (76 aa)). Disordered stretches follow at residues 87–126 (RAPP…SVHD) and 189–272 (LQCR…NHPS). Residues 95-108 (PSGASSGTGSASAT) show a composition bias toward low complexity. Phosphoserine occurs at positions 96 and 113. Residue threonine 117 is modified to Phosphothreonine. 2 stretches are compositionally biased toward pro residues: residues 200–210 (SQPPPQPPAVT) and 251–262 (TPGPAPAGPTPA). The stretch at 242–270 (RAPAQNPELTPGPAPAGPTPAPETNAPNH) is repeat 1. Residues 242-636 (RAPAQNPELT…VASPTITVAM (395 aa)) form a 4 X 29 AA approximate repeats region. Threonine 350 carries the post-translational modification Phosphothreonine. Disordered stretches follow at residues 385–441 (VTMT…TSHP), 461–528 (IQDS…TLQG), and 560–603 (PGMA…PSMA). Residues 393-407 (RPPPTPNAEAPPPGP) are compositionally biased toward pro residues. Residues 408–426 (GQASSVAPSSTNVESSAEG) show a composition bias toward low complexity. The stretch at 415–443 (PSSTNVESSAEGAPPPGPAPPPATSHPRV) is repeat 2. 2 stretches are compositionally biased toward pro residues: residues 427-438 (APPPGPAPPPAT) and 507-520 (PTPP…PGGP). Positions 569–586 (ATASASAGTTNTATTAGP) are enriched in low complexity. 2 tandem repeats follow at residues 574–602 (SAGT…QPSM) and 608–636 (SQLL…TVAM). Positions 588-599 (PGGPAQPPPTPQ) are enriched in pro residues. The segment at 651-692 (QATQTAPPPPPPPPPPPPAPEQQTMPPPGSPSGGAGSPGGLG) is disordered. Pro residues predominate over residues 656-680 (APPPPPPPPPPPPAPEQQTMPPPGS). Residues 681-692 (PSGGAGSPGGLG) show a composition bias toward gly residues. A phosphoserine mark is found at valine 832, serine 964, and serine 973. The tract at residues 947–1132 (PQPLPEEPME…NAQRAFADDP (186 aa)) is disordered. The span at 1005–1020 (AETEPWAAAVPPEWVP) shows a compositional bias: low complexity. Residues 1010–1040 (WAAAVPPEWVPIIQQDIQSQRKVKPQPPLSD) form a required for interaction with GET4 region. The short motif at 1012-1054 (AAVPPEWVPIIQQDIQSQRKVKPQPPLSDAYLSGMPAKRRKTM) is the Nuclear localization site element. The segment at 1022-1132 (IQQDIQSQRK…NAQRAFADDP (111 aa)) is sufficient for the delivery of client proteins to the endoplasmic reticulum. Threonine 1053 bears the Phosphothreonine mark. The tract at residues 1058–1115 (GPQLLLSEAVSRAAKAAGARPLTSPESLSRDLEAPEVQESYRQQLRSDIQKRLQEDPN) is BAG-similar domain, required and sufficient for interaction with UBL4A. Residues 1066-1076 (AVSRAAKAAGA) are compositionally biased toward low complexity. Serine 1081 and serine 1117 each carry phosphoserine.

In terms of assembly, component of the BAG6/BAT3 complex, also named BAT3 complex, at least composed of BAG6, UBL4A and GET4/TRC35. Interacts with GET4; the interaction is direct and localizes BAG6 in the cytosol. Interacts with UBL4A; the interaction is direct and required for UBL4A protein stability. Interacts with AIFM1. Interacts with HSPA2. Interacts with CTCFL. Interacts with p300/EP300. Interacts (via ubiquitin-like domain) with RNF126; required for BAG6-dependent ubiquitination of proteins mislocalized to the cytosol. Interacts (via ubiquitin-like domain) with SGTA; SGTA competes with RNF126 by binding the same region of BAG6, thereby promoting deubiquitination of BAG6-target proteins and rescuing them from degradation. Interacts with ricin A chain. Interacts with VCP and AMFR; both form the VCP/p97-AMFR/gp78 complex. Interacts with SYVN1. Interacts with USP13; the interaction is direct and may mediate UBL4A deubiquitination. Interacts with ZFAND2B. Interacts with KPNA2. Interacts with UBQLN4. As to quaternary structure, (Microbial infection) Interacts with L.pneumophila Lpg2160 and LegU1 proteins. Ricin can induce a cleavage by the caspase CASP3. The released C-terminal peptide induces apoptosis. In terms of processing, (Microbial infection) In case of infection by L.pneumophila, ubiquitinated by the SCF(LegU1) complex. As to expression, expressed by immature dendritic cells (at protein level).

It is found in the cytoplasm. The protein localises to the cytosol. Its subcellular location is the nucleus. It localises to the secreted. The protein resides in the extracellular exosome. In terms of biological role, ATP-independent molecular chaperone preventing the aggregation of misfolded and hydrophobic patches-containing proteins. Functions as part of a cytosolic protein quality control complex, the BAG6/BAT3 complex, which maintains these client proteins in a soluble state and participates in their proper delivery to the endoplasmic reticulum or alternatively can promote their sorting to the proteasome where they undergo degradation. The BAG6/BAT3 complex is involved in the post-translational delivery of tail-anchored/type II transmembrane proteins to the endoplasmic reticulum membrane. Recruited to ribosomes, it interacts with the transmembrane region of newly synthesized tail-anchored proteins and together with SGTA and ASNA1 mediates their delivery to the endoplasmic reticulum. Client proteins that cannot be properly delivered to the endoplasmic reticulum are ubiquitinated by RNF126, an E3 ubiquitin-protein ligase associated with BAG6 and are sorted to the proteasome. SGTA which prevents the recruitment of RNF126 to BAG6 may negatively regulate the ubiquitination and the proteasomal degradation of client proteins. Similarly, the BAG6/BAT3 complex also functions as a sorting platform for proteins of the secretory pathway that are mislocalized to the cytosol either delivering them to the proteasome for degradation or to the endoplasmic reticulum. The BAG6/BAT3 complex also plays a role in the endoplasmic reticulum-associated degradation (ERAD), a quality control mechanism that eliminates unwanted proteins of the endoplasmic reticulum through their retrotranslocation to the cytosol and their targeting to the proteasome. It maintains these retrotranslocated proteins in an unfolded yet soluble state condition in the cytosol to ensure their proper delivery to the proteasome. BAG6 is also required for selective ubiquitin-mediated degradation of defective nascent chain polypeptides by the proteasome. In this context, it may participate in the production of antigenic peptides and play a role in antigen presentation in immune response. BAG6 is also involved in endoplasmic reticulum stress-induced pre-emptive quality control, a mechanism that selectively attenuates the translocation of newly synthesized proteins into the endoplasmic reticulum and reroutes them to the cytosol for proteasomal degradation. BAG6 may ensure the proper degradation of these proteins and thereby protects the endoplasmic reticulum from protein overload upon stress. By inhibiting the polyubiquitination and subsequent proteasomal degradation of HSPA2 it may also play a role in the assembly of the synaptonemal complex during spermatogenesis. Also positively regulates apoptosis by interacting with and stabilizing the proapoptotic factor AIFM1. By controlling the steady-state expression of the IGF1R receptor, indirectly regulates the insulin-like growth factor receptor signaling pathway. Involved in DNA damage-induced apoptosis: following DNA damage, accumulates in the nucleus and forms a complex with p300/EP300, enhancing p300/EP300-mediated p53/TP53 acetylation leading to increase p53/TP53 transcriptional activity. When nuclear, may also act as a component of some chromatin regulator complex that regulates histone 3 'Lys-4' dimethylation (H3K4me2). Functionally, released extracellularly via exosomes, it is a ligand of the natural killer/NK cells receptor NCR3 and stimulates NK cells cytotoxicity. It may thereby trigger NK cells cytotoxicity against neighboring tumor cells and immature myeloid dendritic cells (DC). Its function is as follows. Mediates ricin-induced apoptosis. In Homo sapiens (Human), this protein is Large proline-rich protein BAG6.